A 366-amino-acid polypeptide reads, in one-letter code: Methyltransferase phm5 (366 aa).

Residues 204–205, Asp-230, 255–256, Arg-273, and Arg-274 contribute to the S-adenosyl-L-methionine site; these read GG and SM.

The protein belongs to the class I-like SAM-binding methyltransferase superfamily. Cation-independent O-methyltransferase family.

The protein operates within secondary metabolite biosynthesis. In terms of biological role, methyltransferase; part of the gene cluster that mediates the biosynthesis of the trans-fused decalin-containing tetramic acid phomasetin, the stereochemical opposite of the HIV-1 integrase inhibitor equisetin. The PKS module of phm1 together with the enoylreductase phm4 catalyze the formation of the polyketide unit which is then conjugated to L-serine by the condensation domain of the phm1 NRPS module. Activity of the Dieckmann cyclase domain (RED) of phm1 results in release of the Dieckmann product intermediate. The Diels-Alderase phm7 then uses the Dieckmann product of phm1 as substrate and catalyzes the Diels-Alder cycloaddition to form the decalin ring of N-desmethylphomasetin. N-desmethylphomasetin is further methylated to phomasetin by the methyltransferase phm5. In Pyrenochaetopsis sp, this protein is Methyltransferase phm5.